Reading from the N-terminus, the 668-residue chain is Threonine--tRNA ligase (668 aa).

The 64-residue stretch at Met1 to Arg64 folds into the TGS domain. Residues Asp245 to Pro553 form a catalytic region. Residues Cys347, His398, and His530 each coordinate Zn(2+).

Belongs to the class-II aminoacyl-tRNA synthetase family. Homodimer. It depends on Zn(2+) as a cofactor.

Its subcellular location is the cytoplasm. The enzyme catalyses tRNA(Thr) + L-threonine + ATP = L-threonyl-tRNA(Thr) + AMP + diphosphate + H(+). In terms of biological role, catalyzes the attachment of threonine to tRNA(Thr) in a two-step reaction: L-threonine is first activated by ATP to form Thr-AMP and then transferred to the acceptor end of tRNA(Thr). Also edits incorrectly charged L-seryl-tRNA(Thr). The chain is Threonine--tRNA ligase from Rhizobium leguminosarum bv. trifolii (strain WSM2304).